The chain runs to 54 residues: Large ribosomal subunit protein bL32c (54 aa).

Residues 1–25 (MAVPKKRTSKAKKNSRKANWKRKAA) show a composition bias toward basic residues. The tract at residues 1-26 (MAVPKKRTSKAKKNSRKANWKRKAAK) is disordered.

Belongs to the bacterial ribosomal protein bL32 family.

It localises to the plastid. The protein localises to the chloroplast. This chain is Large ribosomal subunit protein bL32c, found in Thalassiosira pseudonana (Marine diatom).